Here is a 155-residue protein sequence, read N- to C-terminus: Protein-export protein SecB (155 aa).

It belongs to the SecB family. As to quaternary structure, homotetramer, a dimer of dimers. One homotetramer interacts with 1 SecA dimer.

Its subcellular location is the cytoplasm. Its function is as follows. One of the proteins required for the normal export of preproteins out of the cell cytoplasm. It is a molecular chaperone that binds to a subset of precursor proteins, maintaining them in a translocation-competent state. It also specifically binds to its receptor SecA. The protein is Protein-export protein SecB of Escherichia coli O139:H28 (strain E24377A / ETEC).